Here is a 79-residue protein sequence, read N- to C-terminus: D-alanyl carrier protein (79 aa).

The Carrier domain maps to 1–76 (MEEQVLSLLE…RVMAYVKKRV (76 aa)). The residue at position 34 (Ser34) is an O-(pantetheine 4'-phosphoryl)serine.

This sequence belongs to the DltC family. In terms of processing, 4'-phosphopantetheine is transferred from CoA to a specific serine of apo-DCP.

Its subcellular location is the cytoplasm. It functions in the pathway cell wall biogenesis; lipoteichoic acid biosynthesis. Its function is as follows. Carrier protein involved in the D-alanylation of lipoteichoic acid (LTA). The loading of thioester-linked D-alanine onto DltC is catalyzed by D-alanine--D-alanyl carrier protein ligase DltA. The DltC-carried D-alanyl group is further transferred to cell membrane phosphatidylglycerol (PG) by forming an ester bond, probably catalyzed by DltD. D-alanylation of LTA plays an important role in modulating the properties of the cell wall in Gram-positive bacteria, influencing the net charge of the cell wall. This is D-alanyl carrier protein from Abiotrophia defectiva (Streptococcus defectivus).